Here is a 340-residue protein sequence, read N- to C-terminus: Guanine nucleotide-binding protein subunit beta-4 (340 aa).

At Ser-2 the chain carries N-acetylserine. Phosphoserine is present on Ser-2. WD repeat units lie at residues 53–92 (GHLAKIYAMHWGYDSRLLVSASQDGKLIIWDSYTTNKMHA), 95–134 (LRSSWVMTCAYAPSGNYVACGGLDNICSIYNLKTREGNVR), 141–179 (GHTGYLSCCRFLDDSQIVTSSGDTTCALWDIETAQQTTT), 182–221 (GHSGDVMSLSLSPDMRTFVSGACDASSKLWDIRDGMCRQS), and 224–263 (GHVSDINAVSFFPNGYAFATGSDDATCRLFDLRADQELLL). The residue at position 266 (His-266) is a Phosphohistidine. 2 WD repeats span residues 268-307 (NIICGITSVAFSKSGRLLLAGYDDFNCNVWDTLKGDRAGV) and 310-339 (GHDNRVSCLGVTDDGMAVATGSWDSFLRIW).

This sequence belongs to the WD repeat G protein beta family. G proteins are composed of 3 units, alpha, beta and gamma. In terms of tissue distribution, strongly expressed in lung and placenta, whereas it is weakly expressed in brain and heart. Abundantly expressed in the axons and Schwann cells of peripheral nerves.

Functionally, guanine nucleotide-binding proteins (G proteins) are involved as a modulator or transducer in various transmembrane signaling systems. The beta and gamma chains are required for the GTPase activity, for replacement of GDP by GTP, and for G protein-effector interaction. This is Guanine nucleotide-binding protein subunit beta-4 (GNB4) from Homo sapiens (Human).